The primary structure comprises 208 residues: Uracil phosphoribosyltransferase (208 aa).

Residues arginine 78, arginine 103, and 130 to 138 (DPMLATGGS) each bind 5-phospho-alpha-D-ribose 1-diphosphate. Uracil is bound by residues isoleucine 193 and 198–200 (GDA). Aspartate 199 provides a ligand contact to 5-phospho-alpha-D-ribose 1-diphosphate.

It belongs to the UPRTase family. It depends on Mg(2+) as a cofactor.

It carries out the reaction UMP + diphosphate = 5-phospho-alpha-D-ribose 1-diphosphate + uracil. Its pathway is pyrimidine metabolism; UMP biosynthesis via salvage pathway; UMP from uracil: step 1/1. Its activity is regulated as follows. Allosterically activated by GTP. Its function is as follows. Catalyzes the conversion of uracil and 5-phospho-alpha-D-ribose 1-diphosphate (PRPP) to UMP and diphosphate. The protein is Uracil phosphoribosyltransferase of Haemophilus ducreyi (strain 35000HP / ATCC 700724).